The primary structure comprises 61 residues: Small ribosomal subunit protein bS21 (61 aa).

It belongs to the bacterial ribosomal protein bS21 family.

The protein is Small ribosomal subunit protein bS21 of Leuconostoc mesenteroides subsp. mesenteroides (strain ATCC 8293 / DSM 20343 / BCRC 11652 / CCM 1803 / JCM 6124 / NCDO 523 / NBRC 100496 / NCIMB 8023 / NCTC 12954 / NRRL B-1118 / 37Y).